Reading from the N-terminus, the 133-residue chain is MAVNDTIGDMLTRIRNANLARHQTTTIPATRMTRSIAQVLKAEGFIRDFEEQGDGVKRHLVVSLKYRGKQRQPIITALKRVSKPGLRVYANSRELPRVLGGIGIAIISTSNGIMTDREARKQGIGGEVLCYVW.

Belongs to the universal ribosomal protein uS8 family. Part of the 30S ribosomal subunit. Contacts proteins S5 and S12.

One of the primary rRNA binding proteins, it binds directly to 16S rRNA central domain where it helps coordinate assembly of the platform of the 30S subunit. This Thermosynechococcus vestitus (strain NIES-2133 / IAM M-273 / BP-1) protein is Small ribosomal subunit protein uS8.